The chain runs to 242 residues: Uridylate kinase (242 aa).

15–18 (KLSG) contributes to the ATP binding site. The tract at residues 23–28 (GAEGFG) is involved in allosteric activation by GTP. Glycine 57 is a UMP binding site. 2 residues coordinate ATP: glycine 58 and arginine 62. Residues aspartate 77 and 138–145 (TGNPFFTT) each bind UMP. Positions 165, 171, and 174 each coordinate ATP.

It belongs to the UMP kinase family. As to quaternary structure, homohexamer.

The protein resides in the cytoplasm. It carries out the reaction UMP + ATP = UDP + ADP. Its pathway is pyrimidine metabolism; CTP biosynthesis via de novo pathway; UDP from UMP (UMPK route): step 1/1. Its activity is regulated as follows. Allosterically activated by GTP. Inhibited by UTP. Functionally, catalyzes the reversible phosphorylation of UMP to UDP. The chain is Uridylate kinase from Photorhabdus laumondii subsp. laumondii (strain DSM 15139 / CIP 105565 / TT01) (Photorhabdus luminescens subsp. laumondii).